The primary structure comprises 371 residues: Aminomethyltransferase (371 aa).

The protein belongs to the GcvT family. The glycine cleavage system is composed of four proteins: P, T, L and H.

The catalysed reaction is N(6)-[(R)-S(8)-aminomethyldihydrolipoyl]-L-lysyl-[protein] + (6S)-5,6,7,8-tetrahydrofolate = N(6)-[(R)-dihydrolipoyl]-L-lysyl-[protein] + (6R)-5,10-methylene-5,6,7,8-tetrahydrofolate + NH4(+). Functionally, the glycine cleavage system catalyzes the degradation of glycine. This chain is Aminomethyltransferase, found in Pectobacterium carotovorum subsp. carotovorum (strain PC1).